A 270-amino-acid chain; its full sequence is Urease accessory protein UreD (270 aa).

It belongs to the UreD family. As to quaternary structure, ureD, UreF and UreG form a complex that acts as a GTP-hydrolysis-dependent molecular chaperone, activating the urease apoprotein by helping to assemble the nickel containing metallocenter of UreC. The UreE protein probably delivers the nickel.

Its subcellular location is the cytoplasm. Its function is as follows. Required for maturation of urease via the functional incorporation of the urease nickel metallocenter. The protein is Urease accessory protein UreD of Microcystis aeruginosa (strain NIES-843 / IAM M-2473).